The primary structure comprises 1153 residues: Reverse gyrase 2 (1153 aa).

An RG N-terminal-type zinc finger spans residues 1–41 (MLKVNYLFGCPNCNGSISVDRLHAGIPCETCLPGAVEKLDI). Positions 10, 13, 28, and 31 each coordinate Zn(2+). ATP contacts are provided by residues Q86 and 103–110 (APTGVGKT). The 187-residue stretch at 90 to 276 (LNKLVRGESF…ALRFLVGFEP (187 aa)) folds into the Helicase ATP-binding domain. A DEAD box motif is present at residues 184–187 (DDAD). The topoisomerase I stretch occupies residues 567–1153 (MNFKTALLVV…VNPLQSEQYV (587 aa)). In terms of domain architecture, Toprim spans 571–735 (TALLVVESPT…NIFRISYNEI (165 aa)). E577 is a Mg(2+) binding site. The segment at 654–681 (LYRCMSCGKTITKKVSTCPYCGSSMINS) adopts an RG C-terminal-type zinc-finger fold. C657, C660, C671, and C674 together coordinate Zn(2+). Residue D704 coordinates Mg(2+). One can recognise a Topo IA-type catalytic domain in the interval 751–1142 (NESLVKAQIA…DLLNEIKNIK (392 aa)). The active-site O-(5'-phospho-DNA)-tyrosine intermediate is the Y894.

This sequence in the N-terminal section; belongs to the DEAD box helicase family. DDVD subfamily. The protein in the C-terminal section; belongs to the type IA topoisomerase family. As to quaternary structure, monomer. Zn(2+) serves as cofactor. Mg(2+) is required as a cofactor.

Its subcellular location is the cytoplasm. The enzyme catalyses ATP + H2O = ADP + phosphate + H(+). In terms of biological role, modifies the topological state of DNA by introducing positive supercoils in an ATP-dependent process, increasing the linking number in steps of +1. Binds to single-stranded DNA, transiently cleaves and then rejoins the ends, introducing a positive supercoil in the process. The scissile phosphodiester is attacked by the catalytic tyrosine of the enzyme, resulting in the formation of a DNA-(5'-phosphotyrosyl)-enzyme intermediate. Probably involved in rewinding DNA strands in regions of the chromosome that have opened up to allow replication, transcription, DNA repair and/or for DNA protection. Might be a cell cycle protein. The sequence is that of Reverse gyrase 2 from Sulfolobus acidocaldarius (strain ATCC 33909 / DSM 639 / JCM 8929 / NBRC 15157 / NCIMB 11770).